We begin with the raw amino-acid sequence, 352 residues long: MNTTSSAAPPSLGVEFISLLAIILLSVALAVGLPGNSFVVWSILKRMQKRSVTALMVLNLALADLAVLLTAPFFLHFLAQGTWSFGLAGCRLCHYVCGVSMYASVLLITAMSLDRSLAVARPFVSQKLRTKAMARRVLAGIWVLSFLLATPVLAYRTVVPWKTNMSLCFPRYPSEGHRAFHLIFEAVTGFLLPFLAVVASYSDIGRRLQARRFRRSRRTGRLVVLIILTFAAFWLPYHVVNLAEAGRALAGQAAGLGLVGKRLSLARNVLIALAFLSSSVNPVLYACAGGGLLRSAGVGFVAKLLEGTGSEASSTRRGGSLGQTARSGPAALEPGPSESLTASSPLKLNELN.

Topologically, residues 1–19 (MNTTSSAAPPSLGVEFISL) are extracellular. N2 carries an N-linked (GlcNAc...) asparagine glycan. A helical transmembrane segment spans residues 20 to 42 (LAIILLSVALAVGLPGNSFVVWS). Residues 43 to 54 (ILKRMQKRSVTA) lie on the Cytoplasmic side of the membrane. Residues 55-75 (LMVLNLALADLAVLLTAPFFL) form a helical membrane-spanning segment. Over 76–91 (HFLAQGTWSFGLAGCR) the chain is Extracellular. A helical membrane pass occupies residues 92–113 (LCHYVCGVSMYASVLLITAMSL). Residues 114 to 138 (DRSLAVARPFVSQKLRTKAMARRVL) lie on the Cytoplasmic side of the membrane. Residues 139–159 (AGIWVLSFLLATPVLAYRTVV) form a helical membrane-spanning segment. Topologically, residues 160–178 (PWKTNMSLCFPRYPSEGHR) are extracellular. An N-linked (GlcNAc...) asparagine glycan is attached at N164. The chain crosses the membrane as a helical span at residues 179–199 (AFHLIFEAVTGFLLPFLAVVA). Residues 200–221 (SYSDIGRRLQARRFRRSRRTGR) are Cytoplasmic-facing. The chain crosses the membrane as a helical span at residues 222 to 242 (LVVLIILTFAAFWLPYHVVNL). Residues 243-268 (AEAGRALAGQAAGLGLVGKRLSLARN) lie on the Extracellular side of the membrane. Residues 269–289 (VLIALAFLSSSVNPVLYACAG) traverse the membrane as a helical segment. The Cytoplasmic portion of the chain corresponds to 290 to 352 (GGLLRSAGVG…SSPLKLNELN (63 aa)). Polar residues-rich tracts occupy residues 310-326 (SEAS…QTAR) and 338-352 (ESLT…NELN). A disordered region spans residues 310–352 (SEASSTRRGGSLGQTARSGPAALEPGPSESLTASSPLKLNELN).

This sequence belongs to the G-protein coupled receptor 1 family. Post-translationally, phosphorylated by GRK6 upon leukotriene B4 binding; which promotes desensitization. As to expression, expressed at highest levels in heart, skeletal muscle and at lower levels in brain and liver. High level of expression in lymphoid tissues.

The protein resides in the cell membrane. Functionally, receptor for extracellular ATP &gt; UTP and ADP. The activity of this receptor is mediated by G proteins which activate a phosphatidylinositol-calcium second messenger system. May be the cardiac P2Y receptor involved in the regulation of cardiac muscle contraction through modulation of L-type calcium currents. Is a receptor for leukotriene B4, a potent chemoattractant involved in inflammation and immune response. In Homo sapiens (Human), this protein is Leukotriene B4 receptor 1 (LTB4R).